The primary structure comprises 329 residues: Biotin synthase (329 aa).

Positions Tyr46–Arg275 constitute a Radical SAM core domain. The [4Fe-4S] cluster site is built by Cys64, Cys68, and Cys71. Residues Cys108, Cys140, Cys200, and Arg270 each contribute to the [2Fe-2S] cluster site.

This sequence belongs to the radical SAM superfamily. Biotin synthase family. As to quaternary structure, homodimer. Requires [4Fe-4S] cluster as cofactor. The cofactor is [2Fe-2S] cluster.

It catalyses the reaction (4R,5S)-dethiobiotin + (sulfur carrier)-SH + 2 reduced [2Fe-2S]-[ferredoxin] + 2 S-adenosyl-L-methionine = (sulfur carrier)-H + biotin + 2 5'-deoxyadenosine + 2 L-methionine + 2 oxidized [2Fe-2S]-[ferredoxin]. Its pathway is cofactor biosynthesis; biotin biosynthesis; biotin from 7,8-diaminononanoate: step 2/2. Its function is as follows. Catalyzes the conversion of dethiobiotin (DTB) to biotin by the insertion of a sulfur atom into dethiobiotin via a radical-based mechanism. This is Biotin synthase from Anoxybacillus flavithermus (strain DSM 21510 / WK1).